Reading from the N-terminus, the 102-residue chain is Small ribosomal subunit protein uS10 (102 aa).

The protein belongs to the universal ribosomal protein uS10 family. In terms of assembly, part of the 30S ribosomal subunit.

Involved in the binding of tRNA to the ribosomes. This Citrifermentans bemidjiense (strain ATCC BAA-1014 / DSM 16622 / JCM 12645 / Bem) (Geobacter bemidjiensis) protein is Small ribosomal subunit protein uS10.